We begin with the raw amino-acid sequence, 190 residues long: UPF0301 protein Pden_0436 (190 aa).

Belongs to the UPF0301 (AlgH) family.

In Paracoccus denitrificans (strain Pd 1222), this protein is UPF0301 protein Pden_0436.